A 514-amino-acid chain; its full sequence is Serine--tRNA ligase, cytoplasmic (514 aa).

The residue at position 1 (Met1) is an N-acetylmethionine. Residues 9 to 61 (RVDKGGDPALIRESQEKRFKDPGLVDQLVKADSEWRRCRFRADNLNKLKNLCS) are interaction with tRNA. Ser241 is modified (phosphoserine). Residues Thr271 and Arg302 each coordinate L-serine. ATP contacts are provided by residues 302-304 (RQE) and 318-321 (VHQF). Residue Lys323 is modified to N6-acetyllysine. Residue Glu325 coordinates L-serine. Residue 391–394 (ELVS) coordinates ATP. Position 427 (Asn427) interacts with L-serine. A disordered region spans residues 475-514 (PIDQEPSKKQKKQHEGSKKKGAARDVALESQLQNMEVTDA). Basic and acidic residues predominate over residues 479–501 (EPSKKQKKQHEGSKKKGAARDVA). A Nuclear localization signal motif is present at residues 482–494 (KKQKKQHEGSKKK). Over residues 504 to 514 (SQLQNMEVTDA) the composition is skewed to polar residues.

The protein belongs to the class-II aminoacyl-tRNA synthetase family. Type-1 seryl-tRNA synthetase subfamily. Homodimer. The tRNA molecule may bind across the dimer. Interacts with SIRT2. Interacts with METTL6; interaction is required for the tRNA N(3)-methylcytidine methyltransferase activity of METTL6.

The protein resides in the cytoplasm. It is found in the nucleus. The catalysed reaction is tRNA(Ser) + L-serine + ATP = L-seryl-tRNA(Ser) + AMP + diphosphate + H(+). It carries out the reaction tRNA(Sec) + L-serine + ATP = L-seryl-tRNA(Sec) + AMP + diphosphate + H(+). Its pathway is aminoacyl-tRNA biosynthesis; selenocysteinyl-tRNA(Sec) biosynthesis; L-seryl-tRNA(Sec) from L-serine and tRNA(Sec): step 1/1. Its function is as follows. Catalyzes the attachment of serine to tRNA(Ser) in a two-step reaction: serine is first activated by ATP to form Ser-AMP and then transferred to the acceptor end of tRNA(Ser). Is probably also able to aminoacylate tRNA(Sec) with serine, to form the misacylated tRNA L-seryl-tRNA(Sec), which will be further converted into selenocysteinyl-tRNA(Sec). In the nucleus, binds to the VEGFA core promoter and prevents MYC binding and transcriptional activation by MYC. Recruits SIRT2 to the VEGFA promoter, promoting deacetylation of histone H4 at 'Lys-16' (H4K16). Thereby, inhibits the production of VEGFA and sprouting angiogenesis mediated by VEGFA. The polypeptide is Serine--tRNA ligase, cytoplasmic (SARS1) (Bos taurus (Bovine)).